The primary structure comprises 474 residues: Lipoprotein lipase (474 aa).

Residues 1-27 (MESKALLLVALGVWLQSLTAFRGGVAA) form the signal peptide. Residues 32 to 53 (RDFSDIESKFALRTPEDTAEDT) are interaction with GPIHBP1. Cysteines 54 and 67 form a disulfide. N-linked (GlcNAc...) asparagine glycosylation occurs at Asn70. At Tyr121 the chain carries 3'-nitrotyrosine. Ser159 functions as the Nucleophile in the catalytic mechanism. The active-site Charge relay system is Asp183. 3'-nitrotyrosine is present on Tyr191. Residues Ala194, Arg197, Ser199, and Asp202 each coordinate Ca(2+). Residues Cys243 and Cys266 are joined by a disulfide bond. The interval 243–266 (CNIGEAIRVIAEKGLGDVDQLVKC) is essential for determining substrate specificity. The active-site Charge relay system is His268. 2 disulfide bridges follow: Cys291/Cys310 and Cys302/Cys305. A PLAT domain is found at 341–464 (FHYQVKIHFS…KGKDAAVFVK (124 aa)). Tyr343 bears the 3'-nitrotyrosine mark. The N-linked (GlcNAc...) asparagine glycan is linked to Asn386. The tract at residues 417 to 421 (WSDWW) is important for interaction with lipoprotein particles. The interval 430-434 (KIRVK) is important for heparin binding. Residues 443-467 (IFCAREKVSHLQKGKDAAVFVKCHD) form an interaction with GPIHBP1 region. Cys445 and Cys465 are joined by a disulfide.

The protein belongs to the AB hydrolase superfamily. Lipase family. Homodimer. Interacts with GPIHBP1 with 1:1 stoichiometry. Interacts with APOC2; the interaction activates LPL activity in the presence of lipids. Interaction with heparan sulfate proteoglycans is required to protect LPL against loss of activity. Associates with lipoprotein particles in blood plasma. Interacts with LMF1 and SEL1L; interaction with SEL1L is required to prevent aggregation of newly synthesized LPL in the endoplasmic reticulum (ER), and for normal export of LPL from the ER to the extracellular space. Interacts with SORL1; SORL1 acts as a sorting receptor, promoting LPL localization to endosomes and later to lysosomes, leading to degradation of newly synthesized LPL. Post-translationally, tyrosine nitration after lipopolysaccharide (LPS) challenge down-regulates the lipase activity.

It is found in the cell membrane. Its subcellular location is the secreted. The protein localises to the extracellular space. The protein resides in the extracellular matrix. The enzyme catalyses a triacylglycerol + H2O = a diacylglycerol + a fatty acid + H(+). The catalysed reaction is a 1,2-diacyl-sn-glycero-3-phosphocholine + H2O = a 2-acyl-sn-glycero-3-phosphocholine + a fatty acid + H(+). It catalyses the reaction 1,2,3-tri-(9Z-octadecenoyl)-glycerol + H2O = di-(9Z)-octadecenoylglycerol + (9Z)-octadecenoate + H(+). It carries out the reaction 1,2-di-(9Z-octadecenoyl)-sn-glycero-3-phosphocholine + H2O = (9Z-octadecenoyl)-sn-glycero-3-phosphocholine + (9Z)-octadecenoate + H(+). The enzyme catalyses 1,2,3-tributanoylglycerol + H2O = dibutanoylglycerol + butanoate + H(+). The catalysed reaction is 1,2-dihexadecanoyl-sn-glycero-3-phosphocholine + H2O = hexadecanoyl-sn-glycero-3-phosphocholine + hexadecanoate + H(+). With respect to regulation, the apolipoprotein APOC2 acts as a coactivator of LPL activity. Ca(2+) binding promotes protein stability and formation of the active homodimer. Interaction with GPIHBP1 protects LPL against inactivation by ANGPTL4. Its function is as follows. Key enzyme in triglyceride metabolism. Catalyzes the hydrolysis of triglycerides from circulating chylomicrons and very low density lipoproteins (VLDL), and thereby plays an important role in lipid clearance from the blood stream, lipid utilization and storage. Although it has both phospholipase and triglyceride lipase activities it is primarily a triglyceride lipase with low but detectable phospholipase activity. Mediates margination of triglyceride-rich lipoprotein particles in capillaries. Recruited to its site of action on the luminal surface of vascular endothelium by binding to GPIHBP1 and cell surface heparan sulfate proteoglycans. The protein is Lipoprotein lipase (Lpl) of Rattus norvegicus (Rat).